The primary structure comprises 185 residues: NEDD8-conjugating enzyme UBE2F (185 aa).

The interval 1 to 21 (MLTLASKLKRDDGVKGSRTTS) is disordered. An interaction with uba3 region spans residues 1 to 29 (MLTLASKLKRDDGVKGSRTTSTTLDSMRR). The 154-residue stretch at 32 to 185 (VRDRLLVKEV…VEDYIKRYAR (154 aa)) folds into the UBC core domain. Cys116 acts as the Glycyl thioester intermediate in catalysis.

Belongs to the ubiquitin-conjugating enzyme family. UBE2F subfamily.

The catalysed reaction is [E1 NEDD8-activating enzyme]-S-[NEDD8 protein]-yl-L-cysteine + [E2 NEDD8-conjugating enzyme]-L-cysteine = [E1 NEDD8-activating enzyme]-L-cysteine + [E2 NEDD8-conjugating enzyme]-S-[NEDD8-protein]-yl-L-cysteine.. It functions in the pathway protein modification; protein neddylation. Functionally, accepts the ubiquitin-like protein NEDD8 from the UBA3-NAE1 E1 complex and catalyzes its covalent attachment to other proteins. Together with the E3 ubiquitin ligase rnf7/rbx2, specifically neddylates cullin-5 (cul5). Does not neddylate cul1, cul2, cul3, cul4a or cul4b. The polypeptide is NEDD8-conjugating enzyme UBE2F (ube2f) (Xenopus laevis (African clawed frog)).